We begin with the raw amino-acid sequence, 148 residues long: UPF0178 protein LPC_0108 (148 aa).

It belongs to the UPF0178 family.

In Legionella pneumophila (strain Corby), this protein is UPF0178 protein LPC_0108.